A 119-amino-acid chain; its full sequence is Basic phospholipase A2 notechis II-5 (119 aa).

7 cysteine pairs are disulfide-bonded: cysteine 11–cysteine 71, cysteine 27–cysteine 118, cysteine 29–cysteine 45, cysteine 44–cysteine 99, cysteine 51–cysteine 92, cysteine 60–cysteine 85, and cysteine 78–cysteine 90. Ca(2+) is bound by residues tyrosine 28, glycine 30, and glycine 32. Histidine 48 is a catalytic residue. Aspartate 49 contacts Ca(2+). Aspartate 93 is a catalytic residue.

This sequence belongs to the phospholipase A2 family. Group I subfamily. D49 sub-subfamily. Requires Ca(2+) as cofactor. As to expression, expressed by the venom gland.

The protein resides in the secreted. The enzyme catalyses a 1,2-diacyl-sn-glycero-3-phosphocholine + H2O = a 1-acyl-sn-glycero-3-phosphocholine + a fatty acid + H(+). In terms of biological role, snake venom phospholipase A2 (PLA2) that inhibits neuromuscular transmission by blocking acetylcholine release from the nerve termini. Notechis II-5 is less toxic than notexin but has a higher specific phospholipase activity. PLA2 catalyzes the calcium-dependent hydrolysis of the 2-acyl groups in 3-sn-phosphoglycerides. The chain is Basic phospholipase A2 notechis II-5 from Notechis scutatus scutatus (Mainland tiger snake).